A 494-amino-acid polypeptide reads, in one-letter code: Neuronal acetylcholine receptor subunit alpha-6 (494 aa).

An N-terminal signal peptide occupies residues M1–C31. Over E32–P240 the chain is Extracellular. N-linked (GlcNAc...) asparagine glycans are attached at residues N54 and N171. A disulfide bridge connects residues C158 and C172. The next 3 helical transmembrane spans lie at M241–P265, V272–T290, and Y306–I327. The Cytoplasmic segment spans residues H328–R468. Residues K364 to K390 are disordered. Residues I366–K390 are compositionally biased toward basic residues. A helical transmembrane segment spans residues V469–P489.

This sequence belongs to the ligand-gated ion channel (TC 1.A.9) family. Acetylcholine receptor (TC 1.A.9.1) subfamily. Alpha-6/CHRNA6 sub-subfamily. As to quaternary structure, neuronal AChR is composed of two different types of subunits: alpha and non-alpha (beta). CHRNA6/alpha-6 subunit can be combined to CHRNB2/beta-2, CHRNA4/alpha-4 and CHRNB3/beta-3 to give rise to functional receptors. Heteropentamers containing CHRNB3 have an stoichiometry of (CHRNA6:CHRNB2)2:CHRNB3. Interacts with LYPD6.

It is found in the synaptic cell membrane. It catalyses the reaction K(+)(in) = K(+)(out). It carries out the reaction Na(+)(in) = Na(+)(out). The enzyme catalyses Ca(2+)(in) = Ca(2+)(out). Activated by a myriad of ligands such as acetylcholine, cytisine and nicotine. CHRNA6 nAChR activity is inhibited by the antagonists alpha-conotoxin MII and PIA, a small disulfide-constrained peptides from cone snails. Functionally, component of neuronal acetylcholine receptors (nAChRs) that function as pentameric, ligand-gated cation channels with high calcium permeability among other activities. nAChRs are excitatory neurotrasnmitter receptors formed by a collection of nAChR subunits known to mediate synaptic transmission in the nervous system and the neuromuscular junction. Each nAchR subunit confers differential attributes to channel properties, including activation, deactivation and desensitization kinetics, pH sensitivity, cation permeability, and binding to allosteric modulators. CHRNA6 forms pentameric channels with CHRNB2 and CHRNA4 that exhibit high sensitivity to ACh and nicotine and are predominantly expressed in only a few brain areas, including dopaminergic neurons, norepirephrine neurons and cells of the visual system. nAChrs containing CHRNA6 subunits mediate endogenous cholinergic modulation of dopamine and gamma-aminobutyric acid (GABA) release in response to nicotine at nerve terminals. Component of neuronal acetylcholine receptors (nAChRs) that function as pentameric, ligand-gated cation channels with high calcium permeability among other activities. nAChRs are excitatory neurotrasnmitter receptors formed by a collection of nAChR subunits known to mediate synaptic transmission in the nervous system and the neuromuscular junction. Each nAchR subunit confers differential attributes to channel properties, including activation, deactivation and desensitization kinetics, pH sensitivity, cation permeability, and binding to allosteric modulators. CHRNA6 forms pentameric channels with CHRNB2, CHRNB3 and CHRNA4 that exhibit high sensitivity to ACh and nicotine and are predominantly expressed in only a few brain areas, including dopaminergic neurons, norepirephrine neurons and cells of the visual system. nAChrs containing CHRNA6 subunits mediate endogenous cholinergic modulation of dopamine and gamma-aminobutyric acid (GABA) release in response to nicotine at nerve terminals. The sequence is that of Neuronal acetylcholine receptor subunit alpha-6 (CHRNA6) from Gallus gallus (Chicken).